We begin with the raw amino-acid sequence, 105 residues long: UPF0166 protein aq_450 (105 aa).

This sequence belongs to the UPF0166 family.

In Aquifex aeolicus (strain VF5), this protein is UPF0166 protein aq_450.